A 650-amino-acid chain; its full sequence is Acetyl-coenzyme A synthetase (650 aa).

CoA is bound by residues 189 to 192, threonine 307, and asparagine 331; that span reads RGGK. ATP-binding positions include 383 to 385, 407 to 412, aspartate 496, and arginine 511; these read GEP and DTWWQT. CoA is bound at residue serine 519. Residue arginine 522 participates in ATP binding. Residues valine 533, histidine 535, and valine 538 each coordinate Mg(2+). Residue arginine 580 participates in CoA binding. Lysine 605 is subject to N6-acetyllysine.

This sequence belongs to the ATP-dependent AMP-binding enzyme family. Mg(2+) serves as cofactor. Post-translationally, acetylated. Deacetylation by the SIR2-homolog deacetylase activates the enzyme.

The enzyme catalyses acetate + ATP + CoA = acetyl-CoA + AMP + diphosphate. Functionally, catalyzes the conversion of acetate into acetyl-CoA (AcCoA), an essential intermediate at the junction of anabolic and catabolic pathways. AcsA undergoes a two-step reaction. In the first half reaction, AcsA combines acetate with ATP to form acetyl-adenylate (AcAMP) intermediate. In the second half reaction, it can then transfer the acetyl group from AcAMP to the sulfhydryl group of CoA, forming the product AcCoA. The sequence is that of Acetyl-coenzyme A synthetase from Syntrophobacter fumaroxidans (strain DSM 10017 / MPOB).